The chain runs to 201 residues: Recombination protein RecR (201 aa).

Residues 55–70 (CVCCGAFCEGRTCALC) form a C4-type zinc finger. The Toprim domain occupies 78–173 (GIICVVERAQ…IVTRLASGIP (96 aa)).

It belongs to the RecR family.

In terms of biological role, may play a role in DNA repair. It seems to be involved in an RecBC-independent recombinational process of DNA repair. It may act with RecF and RecO. In Treponema pallidum (strain Nichols), this protein is Recombination protein RecR.